Here is a 1604-residue protein sequence, read N- to C-terminus: Transposon Ty1-DR4 Gag-Pol polyprotein (1604 aa).

3 stretches are compositionally biased toward polar residues: residues 1–23 (MESQ…SVTS), 48–60 (TKAN…TPAS), and 127–152 (QSQF…GNTF). Disordered stretches follow at residues 1-93 (MESQ…MMTQ), 126-174 (PQSQ…PPPM), and 352-421 (GSRN…SKST). Over residues 153-165 (TDSSSADSDMTST) the composition is skewed to low complexity. The tract at residues 299–401 (NNGIHINNKV…NSKSKTARAH (103 aa)) is RNA-binding. Positions 402–418 (NVSTSNNSPSTDNDSIS) are enriched in low complexity. Serine 416 carries the phosphoserine modification. The For protease activity; shared with dimeric partner role is filled by aspartate 461. Residues 583–640 (NVHTSESTRKYPYPFIHRMLAHANAQTIRYSLKNNTITYFNESDVDWSSAIDYQCPDC) form an integrase-type zinc finger-like region. Residues 660-835 (NSYEPFQYLH…AGLDISTLLP (176 aa)) form the Integrase catalytic domain. Residues aspartate 671 and aspartate 736 each coordinate Mg(2+). Disordered regions lie at residues 956 to 1087 (SKAV…ETEK), 1092 to 1111 (RSPS…NIVP), and 1130 to 1187 (DLPL…DNET). The segment covering 960–969 (SPTDSTPPST) has biased composition (low complexity). Residues 1005-1015 (STPQISNIEST) are compositionally biased toward polar residues. The segment covering 1038–1053 (ESSHASKSKDFRHSDS) has biased composition (basic and acidic residues). Composition is skewed to polar residues over residues 1054–1082 (YSEN…QISD) and 1101–1111 (PENNSSHNIVP). The short motif at 1178–1212 (KKRSLEDNETEIKVSRDTWNTKNMRSLEPPRSKKR) is the Bipartite nuclear localization signal element. Residues 1338–1476 (NNYYITQLDI…DILGLEIKYQ (139 aa)) enclose the Reverse transcriptase Ty1/copia-type domain. The Mg(2+) site is built by aspartate 1346, aspartate 1427, and aspartate 1428.

As to quaternary structure, the capsid protein forms a homotrimer, from which the VLPs are assembled. The protease is a homodimer, whose active site consists of two apposed aspartic acid residues. Post-translationally, initially, virus-like particles (VLPs) are composed of the structural unprocessed proteins Gag and Gag-Pol, and also contain the host initiator methionine tRNA (tRNA(i)-Met) which serves as a primer for minus-strand DNA synthesis, and a dimer of genomic Ty RNA. Processing of the polyproteins occurs within the particle and proceeds by an ordered pathway, called maturation. First, the protease (PR) is released by autocatalytic cleavage of the Gag-Pol polyprotein yielding capsid protein p45 and a Pol-p154 precursor protein. This cleavage is a prerequisite for subsequent processing of Pol-p154 at the remaining sites to release the mature structural and catalytic proteins. Maturation takes place prior to the RT reaction and is required to produce transposition-competent VLPs.

The protein resides in the cytoplasm. The protein localises to the nucleus. The catalysed reaction is DNA(n) + a 2'-deoxyribonucleoside 5'-triphosphate = DNA(n+1) + diphosphate. The enzyme catalyses Endonucleolytic cleavage to 5'-phosphomonoester.. Functionally, capsid protein (CA) is the structural component of the virus-like particle (VLP), forming the shell that encapsulates the retrotransposons dimeric RNA genome. The particles are assembled from trimer-clustered units and there are holes in the capsid shells that allow for the diffusion of macromolecules. CA also has nucleocapsid-like chaperone activity, promoting primer tRNA(i)-Met annealing to the multipartite primer-binding site (PBS), dimerization of Ty1 RNA and initiation of reverse transcription. In terms of biological role, the aspartyl protease (PR) mediates the proteolytic cleavages of the Gag and Gag-Pol polyproteins after assembly of the VLP. Reverse transcriptase/ribonuclease H (RT) is a multifunctional enzyme that catalyzes the conversion of the retro-elements RNA genome into dsDNA within the VLP. The enzyme displays a DNA polymerase activity that can copy either DNA or RNA templates, and a ribonuclease H (RNase H) activity that cleaves the RNA strand of RNA-DNA heteroduplexes during plus-strand synthesis and hydrolyzes RNA primers. The conversion leads to a linear dsDNA copy of the retrotransposon that includes long terminal repeats (LTRs) at both ends. Its function is as follows. Integrase (IN) targets the VLP to the nucleus, where a subparticle preintegration complex (PIC) containing at least integrase and the newly synthesized dsDNA copy of the retrotransposon must transit the nuclear membrane. Once in the nucleus, integrase performs the integration of the dsDNA into the host genome. This Saccharomyces cerevisiae (strain ATCC 204508 / S288c) (Baker's yeast) protein is Transposon Ty1-DR4 Gag-Pol polyprotein (TY1B-DR4).